The following is a 122-amino-acid chain: Protein 6 (122 aa).

In Hordeum vulgare (Barley), this protein is Protein 6 (6).